We begin with the raw amino-acid sequence, 196 residues long: Interleukin-18 (196 aa).

Residues 1-29 constitute a propeptide that is removed on maturation; sequence MSCEEIAVCAVRLRENLCLYFEELECDAF.

The protein belongs to the IL-1 family. As to quaternary structure, forms a ternary complex with ligand-binding receptor subunit IL18R1 and signaling receptor subunit IL18RAP at the plasma membrane. Mature IL18 first binds to IL18R1 forming a low affinity binary complex, which then interacts with IL18RAP to form a high affinity ternary complex that signals inside the cell. Interacts with cargo receptor TMED10; the interaction mediates the translocation from the cytoplasm into the ERGIC (endoplasmic reticulum-Golgi intermediate compartment) and thereby secretion. Post-translationally, the pro-IL-18 precursor is processed by CASP1 or CASP4 to yield the active form.

It localises to the cytoplasm. It is found in the secreted. Its function is as follows. Augments natural killer cell activity in spleen cells and stimulates interferon gamma production in T-helper type I cells. Involved in transduction of inflammation downstream of pyroptosis: its mature form is specifically released in the extracellular milieu by passing through the gasdermin-D (GSDMD) pore. This is Interleukin-18 (IL18) from Gallus gallus (Chicken).